Here is a 173-residue protein sequence, read N- to C-terminus: ATP synthase subunit b (173 aa).

Residues 25 to 45 form a helical membrane-spanning segment; sequence LINLVIVIGVLYWFLKGFLGG.

The protein belongs to the ATPase B chain family. F-type ATPases have 2 components, F(1) - the catalytic core - and F(0) - the membrane proton channel. F(1) has five subunits: alpha(3), beta(3), gamma(1), delta(1), epsilon(1). F(0) has four main subunits: a(1), b(1), b'(1) and c(10-14). The alpha and beta chains form an alternating ring which encloses part of the gamma chain. F(1) is attached to F(0) by a central stalk formed by the gamma and epsilon chains, while a peripheral stalk is formed by the delta, b and b' chains.

The protein resides in the cellular thylakoid membrane. Functionally, f(1)F(0) ATP synthase produces ATP from ADP in the presence of a proton or sodium gradient. F-type ATPases consist of two structural domains, F(1) containing the extramembraneous catalytic core and F(0) containing the membrane proton channel, linked together by a central stalk and a peripheral stalk. During catalysis, ATP synthesis in the catalytic domain of F(1) is coupled via a rotary mechanism of the central stalk subunits to proton translocation. In terms of biological role, component of the F(0) channel, it forms part of the peripheral stalk, linking F(1) to F(0). The sequence is that of ATP synthase subunit b from Synechococcus sp. (strain CC9311).